Consider the following 372-residue polypeptide: Glutamate 5-kinase (372 aa).

An ATP-binding site is contributed by lysine 14. 3 residues coordinate substrate: serine 54, aspartate 141, and asparagine 153. Position 173–174 (173–174 (TD)) interacts with ATP. The PUA domain maps to 280-358 (RGHVVIDDGA…GEIESVLGYM (79 aa)).

It belongs to the glutamate 5-kinase family.

Its subcellular location is the cytoplasm. The enzyme catalyses L-glutamate + ATP = L-glutamyl 5-phosphate + ADP. Its pathway is amino-acid biosynthesis; L-proline biosynthesis; L-glutamate 5-semialdehyde from L-glutamate: step 1/2. Functionally, catalyzes the transfer of a phosphate group to glutamate to form L-glutamate 5-phosphate. This chain is Glutamate 5-kinase, found in Paraburkholderia xenovorans (strain LB400).